Consider the following 100-residue polypeptide: Large ribosomal subunit protein eL21 (100 aa).

Basic residues predominate over residues 1–21 (MVKRTHGYRYKSRKLLRKKPR). A disordered region spans residues 1–22 (MVKRTHGYRYKSRKLLRKKPRE).

This sequence belongs to the eukaryotic ribosomal protein eL21 family.

In Pyrobaculum neutrophilum (strain DSM 2338 / JCM 9278 / NBRC 100436 / V24Sta) (Thermoproteus neutrophilus), this protein is Large ribosomal subunit protein eL21.